The primary structure comprises 882 residues: Lon protease homolog, mitochondrial (882 aa).

Residues 1–34 constitute a mitochondrion transit peptide; sequence MIHVLKSRSTLLTASSIVRTSVGSSSRYSQTRTY. Residues 68 to 281 form the Lon N-terminal domain; the sequence is TLGLPLVSRP…KALVLLNRER (214 aa). Position 435 to 442 (435 to 442) interacts with ATP; it reads GPPGTGKT. The Lon proteolytic domain occupies 687–878; sequence PLPHGIVMGL…DKVYEVAFSS (192 aa). Active-site residues include Ser-784 and Lys-827.

This sequence belongs to the peptidase S16 family. As to quaternary structure, homohexamer or homoheptamer. Organized in a ring with a central cavity.

The protein localises to the mitochondrion matrix. It catalyses the reaction Hydrolysis of proteins in presence of ATP.. Its function is as follows. ATP-dependent serine protease that mediates the selective degradation of misfolded, unassembled or oxidatively damaged polypeptides as well as certain short-lived regulatory proteins in the mitochondrial matrix. May also have a chaperone function in the assembly of inner membrane protein complexes. Participates in the regulation of mitochondrial gene expression and in the maintenance of the integrity of the mitochondrial genome. Binds to mitochondrial DNA in a site-specific manner. This is Lon protease homolog, mitochondrial from Phaeodactylum tricornutum (strain CCAP 1055/1).